The chain runs to 219 residues: Thiamine-phosphate synthase (219 aa).

4-amino-2-methyl-5-(diphosphooxymethyl)pyrimidine contacts are provided by residues 44-48 and Asn-79; that span reads QFREK. Mg(2+)-binding residues include Asp-80 and Asp-99. Ser-117 serves as a coordination point for 4-amino-2-methyl-5-(diphosphooxymethyl)pyrimidine. 143-145 contributes to the 2-[(2R,5Z)-2-carboxy-4-methylthiazol-5(2H)-ylidene]ethyl phosphate binding site; sequence TST. Residue Lys-146 participates in 4-amino-2-methyl-5-(diphosphooxymethyl)pyrimidine binding. 2-[(2R,5Z)-2-carboxy-4-methylthiazol-5(2H)-ylidene]ethyl phosphate-binding positions include Gly-175 and 195–196; that span reads IS.

Belongs to the thiamine-phosphate synthase family. Mg(2+) serves as cofactor.

It catalyses the reaction 2-[(2R,5Z)-2-carboxy-4-methylthiazol-5(2H)-ylidene]ethyl phosphate + 4-amino-2-methyl-5-(diphosphooxymethyl)pyrimidine + 2 H(+) = thiamine phosphate + CO2 + diphosphate. The catalysed reaction is 2-(2-carboxy-4-methylthiazol-5-yl)ethyl phosphate + 4-amino-2-methyl-5-(diphosphooxymethyl)pyrimidine + 2 H(+) = thiamine phosphate + CO2 + diphosphate. The enzyme catalyses 4-methyl-5-(2-phosphooxyethyl)-thiazole + 4-amino-2-methyl-5-(diphosphooxymethyl)pyrimidine + H(+) = thiamine phosphate + diphosphate. It participates in cofactor biosynthesis; thiamine diphosphate biosynthesis; thiamine phosphate from 4-amino-2-methyl-5-diphosphomethylpyrimidine and 4-methyl-5-(2-phosphoethyl)-thiazole: step 1/1. Condenses 4-methyl-5-(beta-hydroxyethyl)thiazole monophosphate (THZ-P) and 2-methyl-4-amino-5-hydroxymethyl pyrimidine pyrophosphate (HMP-PP) to form thiamine monophosphate (TMP). This chain is Thiamine-phosphate synthase, found in Bacillus cereus (strain ZK / E33L).